Reading from the N-terminus, the 325-residue chain is Thioredoxin reductase (325 aa).

FAD contacts are provided by residues 10 to 13 (SGPS), 39 to 40 (IA), glutamine 44, asparagine 53, valine 86, cysteine 143, aspartate 286, and 293 to 295 (RQA). Cysteine 140 and cysteine 143 are joined by a disulfide.

Belongs to the class-II pyridine nucleotide-disulfide oxidoreductase family. In terms of assembly, homodimer. The cofactor is FAD.

It is found in the cytoplasm. It carries out the reaction [thioredoxin]-dithiol + NADP(+) = [thioredoxin]-disulfide + NADPH + H(+). This Pneumocystis carinii protein is Thioredoxin reductase (TRR1).